The primary structure comprises 296 residues: Formamidopyrimidine-DNA glycosylase (296 aa).

Pro-2 acts as the Schiff-base intermediate with DNA in catalysis. The active-site Proton donor is the Glu-3. Catalysis depends on Lys-58, which acts as the Proton donor; for beta-elimination activity. The DNA site is built by His-104, Arg-126, and Lys-169. The FPG-type zinc finger occupies 260–296 (SVYDREGQACGTPGCGGTVARIVQAGRSTFYCAACQK). Arg-286 functions as the Proton donor; for delta-elimination activity in the catalytic mechanism.

This sequence belongs to the FPG family. Monomer. Requires Zn(2+) as cofactor.

The enzyme catalyses Hydrolysis of DNA containing ring-opened 7-methylguanine residues, releasing 2,6-diamino-4-hydroxy-5-(N-methyl)formamidopyrimidine.. It carries out the reaction 2'-deoxyribonucleotide-(2'-deoxyribose 5'-phosphate)-2'-deoxyribonucleotide-DNA = a 3'-end 2'-deoxyribonucleotide-(2,3-dehydro-2,3-deoxyribose 5'-phosphate)-DNA + a 5'-end 5'-phospho-2'-deoxyribonucleoside-DNA + H(+). Its function is as follows. Involved in base excision repair of DNA damaged by oxidation or by mutagenic agents. Acts as a DNA glycosylase that recognizes and removes damaged bases. Has a preference for oxidized purines, such as 7,8-dihydro-8-oxoguanine (8-oxoG). Has AP (apurinic/apyrimidinic) lyase activity and introduces nicks in the DNA strand. Cleaves the DNA backbone by beta-delta elimination to generate a single-strand break at the site of the removed base with both 3'- and 5'-phosphates. The sequence is that of Formamidopyrimidine-DNA glycosylase from Rhizobium etli (strain CIAT 652).